Here is a 190-residue protein sequence, read N- to C-terminus: Imidazoleglycerol-phosphate dehydratase (190 aa).

Belongs to the imidazoleglycerol-phosphate dehydratase family.

The protein resides in the cytoplasm. The enzyme catalyses D-erythro-1-(imidazol-4-yl)glycerol 3-phosphate = 3-(imidazol-4-yl)-2-oxopropyl phosphate + H2O. It participates in amino-acid biosynthesis; L-histidine biosynthesis; L-histidine from 5-phospho-alpha-D-ribose 1-diphosphate: step 6/9. The chain is Imidazoleglycerol-phosphate dehydratase from Aliarcobacter butzleri (strain RM4018) (Arcobacter butzleri).